The following is a 317-amino-acid chain: Phospho-N-acetylmuramoyl-pentapeptide-transferase (317 aa).

9 helical membrane passes run 6-26 (IVMAIVISFIVASILGPIIIP), 52-72 (PTIGGLIFIFATIITMFIMVG), 78-98 (AMIALYSFVGFGFVGFLDDLL), 114-134 (MILLLIVSGFLTWYAYKYIGT), 145-165 (INFGLFYIPFVMFYFAGVTNA), 171-191 (GLDGLATSVTVLVTTFLGIIS), 194-214 (LGHISLAIFCVALAGALLAFL), 223-244 (VFMGDTGSLALGGAVAMVALIL), and 297-317 (KIVSVFSIITVVFCFIAFASL).

The protein belongs to the glycosyltransferase 4 family. MraY subfamily. Mg(2+) is required as a cofactor.

The protein resides in the cell membrane. The enzyme catalyses UDP-N-acetyl-alpha-D-muramoyl-L-alanyl-gamma-D-glutamyl-meso-2,6-diaminopimeloyl-D-alanyl-D-alanine + di-trans,octa-cis-undecaprenyl phosphate = di-trans,octa-cis-undecaprenyl diphospho-N-acetyl-alpha-D-muramoyl-L-alanyl-D-glutamyl-meso-2,6-diaminopimeloyl-D-alanyl-D-alanine + UMP. The protein operates within cell wall biogenesis; peptidoglycan biosynthesis. Catalyzes the initial step of the lipid cycle reactions in the biosynthesis of the cell wall peptidoglycan: transfers peptidoglycan precursor phospho-MurNAc-pentapeptide from UDP-MurNAc-pentapeptide onto the lipid carrier undecaprenyl phosphate, yielding undecaprenyl-pyrophosphoryl-MurNAc-pentapeptide, known as lipid I. The protein is Phospho-N-acetylmuramoyl-pentapeptide-transferase of Clostridium perfringens (strain 13 / Type A).